A 495-amino-acid polypeptide reads, in one-letter code: Serine/threonine-protein kinase F (495 aa).

Positions 46–314 (YLPVKLLGQG…ASAEEVLAVL (269 aa)) constitute a Protein kinase domain. ATP is bound by residues 52-60 (LGQGGFGAA) and Lys77. The active-site Proton acceptor is Asp187. The interval 316–354 (GGKGNQGKAPPGATVSTPQGTNTQIQPTPASSASPLTAP) is disordered. Polar residues predominate over residues 329–350 (TVSTPQGTNTQIQPTPASSASP).

This sequence belongs to the protein kinase superfamily. Ser/Thr protein kinase family.

It carries out the reaction L-seryl-[protein] + ATP = O-phospho-L-seryl-[protein] + ADP + H(+). The enzyme catalyses L-threonyl-[protein] + ATP = O-phospho-L-threonyl-[protein] + ADP + H(+). The sequence is that of Serine/threonine-protein kinase F (spkF) from Synechocystis sp. (strain ATCC 27184 / PCC 6803 / Kazusa).